The sequence spans 155 residues: Putative protein p31 (155 aa).

In Acyrthosiphon pisum secondary endosymbiont phage 1 (Bacteriophage APSE-1), this protein is Putative protein p31 (31).